The chain runs to 30 residues: SVDFDSESPRKPXIQNEIVDLHNPLRRXVN.

Residues Ser1 to Asn30 are disordered.

This sequence belongs to the CRISP family. Contains 8 disulfide bonds. As to expression, expressed by the venom gland.

Its subcellular location is the secreted. In terms of biological role, inhibits calcium-activated potassium channels (KCa), voltage-gated potassium channel (Kv), and the calcium release channel/ryanodine receptor (RyR). The polypeptide is Cysteine-rich venom protein okinavin (Ovophis okinavensis (Ryukyu Island pit viper)).